The chain runs to 403 residues: Soluble calcium-activated nucleotidase 1 (403 aa).

The Cytoplasmic portion of the chain corresponds to 1-44 (MPIQPFDQREWNEPMHSLRISVGGLPVLASMTKATDPRFRPRWR). A helical; Signal-anchor for type II membrane protein transmembrane segment spans residues 45–61 (VILTSFVGAALLWLLYS). Residues 62-403 (HHQTPVSGRP…SVKYEGIEFI (342 aa)) are Lumenal-facing. Asn90 carries N-linked (GlcNAc...) asparagine glycosylation. Residues Ser170, Asp171, Glu217, Glu286, Ser347, and Glu398 each coordinate Ca(2+).

This sequence belongs to the apyrase family. Monomer. Homodimer; dimerization is Ca(2+)-dependent. Ca(2+) serves as cofactor. In terms of tissue distribution, detected in intestine, thymus, heart, lung, spleen, kidney, liver, testis, skeletal muscle and brain.

The protein localises to the endoplasmic reticulum membrane. It is found in the golgi apparatus. It localises to the golgi stack membrane. The catalysed reaction is a ribonucleoside 5'-diphosphate + H2O = a ribonucleoside 5'-phosphate + phosphate + H(+). In terms of biological role, calcium-dependent nucleotidase with a preference for UDP. The order of activity with different substrates is UDP &gt; GDP &gt; IDP &gt;&gt; UTP &gt; CDP = GTP = ITP. Has very low activity towards ADP and even lower activity towards ATP. Does not hydrolyze AMP and GMP. Involved in proteoglycan synthesis. This is Soluble calcium-activated nucleotidase 1 (Cant1) from Rattus norvegicus (Rat).